The following is a 90-amino-acid chain: Mitochondrial import inner membrane translocase subunit Tim8 A (90 aa).

The Twin CX3C motif signature appears at 36–59 (CWEKCMDKPGPKLDSRTEVCFVNC). Disulfide bonds link Cys-36–Cys-59 and Cys-40–Cys-55.

Belongs to the small Tim family. Heterohexamer; composed of 3 copies of TIMM8A and 3 copies of TIMM13, named soluble 70 kDa complex. Associates with the TIM22 complex, whose core is composed of TIMM22.

The protein resides in the mitochondrion inner membrane. Its function is as follows. Mitochondrial intermembrane chaperone that participates in the import and insertion of some multi-pass transmembrane proteins into the mitochondrial inner membrane. Also required for the transfer of beta-barrel precursors from the TOM complex to the sorting and assembly machinery (SAM complex) of the outer membrane. Acts as a chaperone-like protein that protects the hydrophobic precursors from aggregation and guide them through the mitochondrial intermembrane space. The TIMM8-TIMM13 complex mediates the import of some proteins while the predominant TIMM9-TIMM10 70 kDa complex mediates the import of much more proteins. This Danio rerio (Zebrafish) protein is Mitochondrial import inner membrane translocase subunit Tim8 A (timm8a).